Here is a 218-residue protein sequence, read N- to C-terminus: Glycerol-3-phosphate acyltransferase (218 aa).

Helical transmembrane passes span 5–25 (ALGM…ILIC), 53–73 (LAAA…VWLA), 80–100 (PFYL…PVFF), 115–135 (IAAI…LTVL), and 138–158 (GYSS…VWWF).

It belongs to the PlsY family. As to quaternary structure, probably interacts with PlsX.

Its subcellular location is the cell inner membrane. It carries out the reaction an acyl phosphate + sn-glycerol 3-phosphate = a 1-acyl-sn-glycero-3-phosphate + phosphate. It participates in lipid metabolism; phospholipid metabolism. Catalyzes the transfer of an acyl group from acyl-phosphate (acyl-PO(4)) to glycerol-3-phosphate (G3P) to form lysophosphatidic acid (LPA). This enzyme utilizes acyl-phosphate as fatty acyl donor, but not acyl-CoA or acyl-ACP. The sequence is that of Glycerol-3-phosphate acyltransferase from Proteus mirabilis (strain HI4320).